The primary structure comprises 308 residues: Methionine synthase (308 aa).

4 residues coordinate Zn(2+): H192, C194, E215, and C282.

The protein belongs to the archaeal MetE family. It depends on Zn(2+) as a cofactor.

It participates in amino-acid biosynthesis; L-methionine biosynthesis via de novo pathway. Its function is as follows. Catalyzes the transfer of a methyl group to L-homocysteine resulting in methionine formation. Can use methylcobalamin and methylcobinamide as methyl donors, but methylcobalamin is not considered to be the physiological substrate. The polypeptide is Methionine synthase (Methanocaldococcus jannaschii (strain ATCC 43067 / DSM 2661 / JAL-1 / JCM 10045 / NBRC 100440) (Methanococcus jannaschii)).